Here is a 443-residue protein sequence, read N- to C-terminus: Xaa-Pro dipeptidase (443 aa).

The Mn(2+) site is built by Asp-246, Asp-257, His-339, Glu-384, and Glu-423.

The protein belongs to the peptidase M24B family. Bacterial-type prolidase subfamily. The cofactor is Mn(2+).

The catalysed reaction is Xaa-L-Pro dipeptide + H2O = an L-alpha-amino acid + L-proline. Its function is as follows. Splits dipeptides with a prolyl residue in the C-terminal position. The protein is Xaa-Pro dipeptidase of Pectobacterium atrosepticum (strain SCRI 1043 / ATCC BAA-672) (Erwinia carotovora subsp. atroseptica).